The sequence spans 733 residues: Photosystem I P700 chlorophyll a apoprotein A2 (733 aa).

Helical transmembrane passes span 46–69 (IFAS…FHVA), 135–158 (LYQG…LHLQ), 175–199 (LNHH…HVAI), 273–291 (IAHH…GHMY), 330–353 (LHFQ…QHMY), 369–395 (AALY…IFFV), 417–439 (ALIS…LYVH), and 516–534 (FLVH…LILV). [4Fe-4S] cluster contacts are provided by C558 and C567. The next 2 membrane-spanning stretches (helical) occupy residues 574-595 (AFYL…YWHW) and 642-664 (LSVW…MFLI). Chlorophyll a is bound by residues H653, M661, and Y669. W670 is a binding site for phylloquinone. Residues 706–726 (LVGLAHFTVGYVLTYAAFLIA) form a helical membrane-spanning segment.

This sequence belongs to the PsaA/PsaB family. The PsaA/B heterodimer binds the P700 chlorophyll special pair and subsequent electron acceptors. PSI consists of a core antenna complex that captures photons, and an electron transfer chain that converts photonic excitation into a charge separation. The cyanobacterial PSI reaction center is composed of one copy each of PsaA,B,C,D,E,F,I,J,K,L,M and X, and forms trimeric complexes. The cofactor is PSI electron transfer chain: 5 chlorophyll a, 1 chlorophyll a', 2 phylloquinones and 3 4Fe-4S clusters. PSI core antenna: 90 chlorophyll a, 22 carotenoids, 3 phospholipids and 1 galactolipid. P700 is a chlorophyll a/chlorophyll a' dimer, A0 is one or more chlorophyll a, A1 is one or both phylloquinones and FX is a shared 4Fe-4S iron-sulfur center..

Its subcellular location is the cellular thylakoid membrane. The enzyme catalyses reduced [plastocyanin] + hnu + oxidized [2Fe-2S]-[ferredoxin] = oxidized [plastocyanin] + reduced [2Fe-2S]-[ferredoxin]. PsaA and PsaB bind P700, the primary electron donor of photosystem I (PSI), as well as the electron acceptors A0, A1 and FX. PSI is a plastocyanin/cytochrome c6-ferredoxin oxidoreductase, converting photonic excitation into a charge separation, which transfers an electron from the donor P700 chlorophyll pair to the spectroscopically characterized acceptors A0, A1, FX, FA and FB in turn. Oxidized P700 is reduced on the lumenal side of the thylakoid membrane by plastocyanin or cytochrome c6. The polypeptide is Photosystem I P700 chlorophyll a apoprotein A2 (Picosynechococcus sp. (strain ATCC 27264 / PCC 7002 / PR-6) (Agmenellum quadruplicatum)).